The chain runs to 431 residues: Enolase (431 aa).

(2R)-2-phosphoglycerate is bound at residue glutamine 167. Glutamate 209 serves as the catalytic Proton donor. Residues aspartate 246, glutamate 289, and aspartate 316 each coordinate Mg(2+). Residues lysine 341, arginine 370, serine 371, and lysine 392 each coordinate (2R)-2-phosphoglycerate. The Proton acceptor role is filled by lysine 341.

This sequence belongs to the enolase family. As to quaternary structure, component of the RNA degradosome, a multiprotein complex involved in RNA processing and mRNA degradation. The cofactor is Mg(2+).

The protein localises to the cytoplasm. Its subcellular location is the secreted. It localises to the cell surface. It catalyses the reaction (2R)-2-phosphoglycerate = phosphoenolpyruvate + H2O. It functions in the pathway carbohydrate degradation; glycolysis; pyruvate from D-glyceraldehyde 3-phosphate: step 4/5. Functionally, catalyzes the reversible conversion of 2-phosphoglycerate (2-PG) into phosphoenolpyruvate (PEP). It is essential for the degradation of carbohydrates via glycolysis. This chain is Enolase, found in Shewanella loihica (strain ATCC BAA-1088 / PV-4).